The chain runs to 428 residues: Histidine--tRNA ligase (428 aa).

This sequence belongs to the class-II aminoacyl-tRNA synthetase family. In terms of assembly, homodimer.

The protein resides in the cytoplasm. The catalysed reaction is tRNA(His) + L-histidine + ATP = L-histidyl-tRNA(His) + AMP + diphosphate + H(+). This Lactobacillus delbrueckii subsp. bulgaricus (strain ATCC BAA-365 / Lb-18) protein is Histidine--tRNA ligase.